The primary structure comprises 329 residues: Mitochondrial substrate carrier family protein Q (329 aa).

3 Solcar repeats span residues Val18–Ile115, Leu125–Leu206, and Leu216–His310. Helical transmembrane passes span Leu21–Phe41, Leu95–Ile115, Leu131–Val151, Gly175–Val195, Val221–Leu241, and Ala298–Leu318.

The protein belongs to the mitochondrial carrier (TC 2.A.29) family.

The protein localises to the peroxisome membrane. Its function is as follows. May have transport activity. The polypeptide is Mitochondrial substrate carrier family protein Q (mcfQ) (Dictyostelium discoideum (Social amoeba)).